The sequence spans 322 residues: Ethylmalonyl-CoA decarboxylase (322 aa).

N6-acetyllysine; alternate is present on Lys232. Lys232 carries the post-translational modification N6-succinyllysine; alternate. Lys316 carries the N6-succinyllysine modification.

Belongs to the enoyl-CoA hydratase/isomerase family.

Its subcellular location is the cytoplasm. It localises to the cytosol. The catalysed reaction is (2S)-ethylmalonyl-CoA + H(+) = butanoyl-CoA + CO2. It carries out the reaction (S)-methylmalonyl-CoA + H(+) = propanoyl-CoA + CO2. It catalyses the reaction (2R)-ethylmalonyl-CoA + H(+) = butanoyl-CoA + CO2. Decarboxylates ethylmalonyl-CoA, a potentially toxic metabolite, to form butyryl-CoA, suggesting it might be involved in metabolite proofreading. Acts preferentially on (S)-ethylmalonyl-CoA but also has some activity on the (R)-isomer. Also has methylmalonyl-CoA decarboxylase activity at lower level. In Mus musculus (Mouse), this protein is Ethylmalonyl-CoA decarboxylase (Echdc1).